The sequence spans 168 residues: Photosystem I assembly protein Ycf3 (168 aa).

3 TPR repeats span residues 35-68 (AFTYYRDGMSAQSEGNYAEALQNYYEATRPEIDP), 72-105 (SYILYNIGLIHTSNGEHTKALEYYFRALERNPFL), and 120-153 (GEQAIRQGDSEIAETWSDQAAEYWKQAIALTPGN).

It belongs to the Ycf3 family.

It is found in the plastid. Its subcellular location is the chloroplast thylakoid membrane. Functionally, essential for the assembly of the photosystem I (PSI) complex. May act as a chaperone-like factor to guide the assembly of the PSI subunits. The polypeptide is Photosystem I assembly protein Ycf3 (Amborella trichopoda).